Consider the following 252-residue polypeptide: 5-oxoprolinase subunit A (252 aa).

This sequence belongs to the LamB/PxpA family. As to quaternary structure, forms a complex composed of PxpA, PxpB and PxpC.

It catalyses the reaction 5-oxo-L-proline + ATP + 2 H2O = L-glutamate + ADP + phosphate + H(+). Its function is as follows. Catalyzes the cleavage of 5-oxoproline to form L-glutamate coupled to the hydrolysis of ATP to ADP and inorganic phosphate. The polypeptide is 5-oxoprolinase subunit A (Staphylococcus epidermidis (strain ATCC 35984 / DSM 28319 / BCRC 17069 / CCUG 31568 / BM 3577 / RP62A)).